A 415-amino-acid polypeptide reads, in one-letter code: L-threonine dehydratase biosynthetic IlvA (415 aa).

At lysine 53 the chain carries N6-(pyridoxal phosphate)lysine. Residues asparagine 80, 183–187, and serine 308 contribute to the pyridoxal 5'-phosphate site; that span reads GGGGL. One can recognise an ACT-like domain in the interval 332–406; it reads HYFIIQFPQR…KGFEYREINK (75 aa).

The protein belongs to the serine/threonine dehydratase family. As to quaternary structure, homotetramer. Pyridoxal 5'-phosphate is required as a cofactor.

The enzyme catalyses L-threonine = 2-oxobutanoate + NH4(+). It participates in amino-acid biosynthesis; L-isoleucine biosynthesis; 2-oxobutanoate from L-threonine: step 1/1. In terms of biological role, catalyzes the anaerobic formation of alpha-ketobutyrate and ammonia from threonine in a two-step reaction. The first step involved a dehydration of threonine and a production of enamine intermediates (aminocrotonate), which tautomerizes to its imine form (iminobutyrate). Both intermediates are unstable and short-lived. The second step is the nonenzymatic hydrolysis of the enamine/imine intermediates to form 2-ketobutyrate and free ammonia. In the low water environment of the cell, the second step is accelerated by RidA. This Halalkalibacterium halodurans (strain ATCC BAA-125 / DSM 18197 / FERM 7344 / JCM 9153 / C-125) (Bacillus halodurans) protein is L-threonine dehydratase biosynthetic IlvA (ilvA).